The primary structure comprises 388 residues: LIM/homeobox protein Lhx9 (388 aa).

2 consecutive LIM zinc-binding domains span residues 69–130 (ISDR…CHLG) and 131–193 (ISAS…LSYT). 3 disordered regions span residues 239–263 (ENEADHLDRDQQPYPPSQKTKRMRT), 321–356 (ENGGVDKADGTSLPAPPSADSGALTPPGTATTLTDL), and 369–388 (SNMDSHESGSPSQTTLTNLF). The segment at residues 267–326 (HHQLRTMKSYFAINHNPDAKDLKQLAQKTGLTKRVLQVWFQNARAKFRRNLLRQENGGVD) is a DNA-binding region (homeobox). A compositionally biased stretch (low complexity) spans 344-356 (LTPPGTATTLTDL). Residues 376-388 (SGSPSQTTLTNLF) show a composition bias toward polar residues.

As to quaternary structure, interacts with LDB1 and LDB2.

The protein localises to the nucleus. Involved in gonadal development. The protein is LIM/homeobox protein Lhx9 (Lhx9) of Rattus norvegicus (Rat).